Here is a 614-residue protein sequence, read N- to C-terminus: Replication protein E1 (614 aa).

The segment at 1-25 (MASRVSDTGNGNENKENEGTVASDH) is disordered. Positions 13-25 (ENKENEGTVASDH) are enriched in basic and acidic residues. The Nuclear localization signal motif lies at 88 to 90 (KRK). 2 positions are modified to phosphoserine; by host: serine 94 and serine 104. Positions 103-112 (LSPRLAGVSL) match the Nuclear export signal motif. The span at 136-146 (VEVSQLSSTPS) shows a compositional bias: polar residues. The interval 136–156 (VEVSQLSSTPSAPGPDIRLPK) is disordered. The interval 154–316 (LPKPSDIDLE…NQCVVSNQQT (163 aa)) is DNA-binding region. Positions 403-567 (NSWRGIVHFL…FPLKGNGQPL (165 aa)) constitute an SF3 helicase domain. An ATP-binding site is contributed by 443 to 450 (GPSDTGKS).

The protein belongs to the papillomaviridae E1 protein family. In terms of assembly, can form hexamers. Interacts with E2 protein; this interaction increases E1 DNA binding specificity. Interacts with host DNA polymerase subunit POLA2. Interacts with host single stranded DNA-binding protein RPA1. Interacts with host TOP1; this interaction stimulates the enzymatic activity of TOP1. Post-translationally, phosphorylated.

The protein localises to the host nucleus. It carries out the reaction Couples ATP hydrolysis with the unwinding of duplex DNA by translocating in the 3'-5' direction.. The enzyme catalyses ATP + H2O = ADP + phosphate + H(+). Functionally, ATP-dependent DNA 3'-5' helicase required for initiation of viral DNA replication. It forms a complex with the viral E2 protein. The E1-E2 complex binds to the replication origin which contains binding sites for both proteins. During the initial step, a dimer of E1 interacts with a dimer of protein E2 leading to a complex that binds the viral origin of replication with high specificity. Then, a second dimer of E1 displaces the E2 dimer in an ATP-dependent manner to form the E1 tetramer. Following this, two E1 monomers are added to each half of the site, which results in the formation of two E1 trimers on the viral ori. Subsequently, two hexamers will be created. The double hexamer acts as a bi-directional helicase machinery and unwinds the viral DNA and then recruits the host DNA polymerase to start replication. The sequence is that of Replication protein E1 from Homo sapiens (Human).